The chain runs to 92 residues: Cell division topological specificity factor (92 aa).

Belongs to the MinE family.

In terms of biological role, prevents the cell division inhibition by proteins MinC and MinD at internal division sites while permitting inhibition at polar sites. This ensures cell division at the proper site by restricting the formation of a division septum at the midpoint of the long axis of the cell. The chain is Cell division topological specificity factor from Syntrophobacter fumaroxidans (strain DSM 10017 / MPOB).